The chain runs to 65 residues: MNAPLDRPANSVDPKLLEILVCPMTKGPLEYDAAKQELISRSAKLAYPIRDGIPIMLPEEARKIG.

This sequence belongs to the UPF0434 family.

In Bradyrhizobium sp. (strain BTAi1 / ATCC BAA-1182), this protein is UPF0434 protein BBta_0300.